The primary structure comprises 147 residues: Hemoglobin subunit gamma (147 aa).

In terms of domain architecture, Globin spans His-3–His-147. His-64 and His-93 together coordinate heme b.

The protein belongs to the globin family. As to quaternary structure, heterotetramer of two alpha chains and two gamma chains in fetal hemoglobin (Hb F). In terms of tissue distribution, red blood cells.

In terms of biological role, gamma chains make up the fetal hemoglobin F, in combination with alpha chains. The sequence is that of Hemoglobin subunit gamma (HBG) from Elephas maximus (Indian elephant).